Here is a 315-residue protein sequence, read N- to C-terminus: NADH-ubiquinone oxidoreductase chain 1 (315 aa).

The next 8 helical transmembrane spans lie at 6-26 (FILSLIGSLLLIICVLVSVAF), 80-100 (ISPIFSLFLSLFVWMCMPFFV), 107-127 (LGGLFFLCCTSLGVYTVMIAG), 153-173 (LALILLSFVFLIGSYNMMYFF), 177-197 (IYIWFLIILFPMALVWLTISL), 229-249 (LIFMAEYASILFMSMLFCVIF), 253-273 (DVFNLLFYVKLTFISFVFIWA), and 292-312 (CFLSFSLNYLLFFIGFKILLF).

This sequence belongs to the complex I subunit 1 family.

It localises to the mitochondrion inner membrane. It catalyses the reaction a ubiquinone + NADH + 5 H(+)(in) = a ubiquinol + NAD(+) + 4 H(+)(out). Functionally, core subunit of the mitochondrial membrane respiratory chain NADH dehydrogenase (Complex I) that is believed to belong to the minimal assembly required for catalysis. Complex I functions in the transfer of electrons from NADH to the respiratory chain. The immediate electron acceptor for the enzyme is believed to be ubiquinone. This is NADH-ubiquinone oxidoreductase chain 1 (mt:ND1) from Drosophila persimilis (Fruit fly).